The primary structure comprises 526 residues: GMP synthase [glutamine-hydrolyzing] (526 aa).

The region spanning 9–208 (RILILDFGSQ…VMDICGCETL (200 aa)) is the Glutamine amidotransferase type-1 domain. C86 acts as the Nucleophile in catalysis. Active-site residues include H182 and E184. The GMPS ATP-PPase domain maps to 209–401 (WTSSSIIEDA…LGLPYEMLYR (193 aa)). Position 236-242 (236-242 (SGGVDSS)) interacts with ATP.

Homodimer.

It carries out the reaction XMP + L-glutamine + ATP + H2O = GMP + L-glutamate + AMP + diphosphate + 2 H(+). It functions in the pathway purine metabolism; GMP biosynthesis; GMP from XMP (L-Gln route): step 1/1. In terms of biological role, catalyzes the synthesis of GMP from XMP. The polypeptide is GMP synthase [glutamine-hydrolyzing] (Psychromonas ingrahamii (strain DSM 17664 / CCUG 51855 / 37)).